The chain runs to 251 residues: Small ribosomal subunit protein uS2 (251 aa).

It belongs to the universal ribosomal protein uS2 family.

The polypeptide is Small ribosomal subunit protein uS2 (Synechococcus elongatus (strain ATCC 33912 / PCC 7942 / FACHB-805) (Anacystis nidulans R2)).